Reading from the N-terminus, the 213-residue chain is Urease accessory protein UreG (213 aa).

12-19 (GPVGSGKT) serves as a coordination point for GTP.

Belongs to the SIMIBI class G3E GTPase family. UreG subfamily. In terms of assembly, homodimer. UreD, UreF and UreG form a complex that acts as a GTP-hydrolysis-dependent molecular chaperone, activating the urease apoprotein by helping to assemble the nickel containing metallocenter of UreC. The UreE protein probably delivers the nickel.

It localises to the cytoplasm. Functionally, facilitates the functional incorporation of the urease nickel metallocenter. This process requires GTP hydrolysis, probably effectuated by UreG. The protein is Urease accessory protein UreG of Marinomonas sp. (strain MWYL1).